Here is a 461-residue protein sequence, read N- to C-terminus: Carboxypeptidase Rv3627c (461 aa).

An N-terminal signal peptide occupies residues 1–28 (MGPTRWRKSTHVVVGAAVLAFVAVVVAA). The active-site Acyl-ester intermediate is S114. K117 functions as the Proton acceptor in the catalytic mechanism. The active site involves S295.

Belongs to the peptidase S13 family.

Carboxypeptidase that cleaves terminal D-alanine from peptidoglycan in the mycobacterial cell wall. May cleave L-Lys-D-Ala and/or D-Ala-D-Ala peptide bonds. Exerts important effects on mycobacterial cell morphology and cell division. This chain is Carboxypeptidase Rv3627c, found in Mycobacterium tuberculosis (strain ATCC 25618 / H37Rv).